Consider the following 2387-residue polypeptide: Paternally-expressed gene 3 protein (2387 aa).

Residues 44–126 form the SCAN box domain; the sequence is HQRFRNFLYV…ALLEDYEAMY (83 aa). Disordered stretches follow at residues 127–194, 262–305, 321–371, and 392–423; these read EPED…RDLA, DGHS…ICEA, ARSS…AFGG, and RYHF…EARR. 4 stretches are compositionally biased toward basic and acidic residues: residues 160-179, 291-305, 321-364, and 404-423; these read SERE…DRWP, PETK…ICEA, ARSS…ERGP, and HDPR…EARR. The C2H2-type 1 zinc finger occupies 451–473; that stretch reads YVCDECGRSFAVISEFVEHQIVH. The interval 492–542 is disordered; the sequence is SEAQSRPEGARRSEGAQAAGLAEHRGGQAQEHLRGSGDEEQDEPFLPSPTF. Over residues 513 to 528 the composition is skewed to basic and acidic residues; that stretch reads AEHRGGQAQEHLRGSG. C2H2-type zinc fingers lie at residues 555–577 and 610–632; these read YECK…QKIH and YECK…QKTH. A C2H2-type 4; degenerate zinc finger spans residues 668–690; that stretch reads YDFREGGDAFGRSSDFMEHQKIH. 3 disordered regions span residues 704–747, 764–797, and 820–858; these read PLLH…EARG, FRPP…ESPY, and DHLA…NIER. Over residues 711–720 the composition is skewed to polar residues; that stretch reads MPGSQKSHTI. Residues 846 to 856 show a composition bias toward basic residues; sequence HQKARAKKKNI. The segment at 884 to 906 adopts a C2H2-type 5 zinc-finger fold; the sequence is YECLECGEFFVRSSELAEHQKIH. Repeat copies occupy residues 965 to 973, 974 to 982, 983 to 991, 1001 to 1009, 1010 to 1018, 1028 to 1036, 1046 to 1054, 1055 to 1063, 1073 to 1081, 1091 to 1099, 1109 to 1117, 1118 to 1126, 1136 to 1144, 1145 to 1153, 1154 to 1162, 1163 to 1171, 1172 to 1180, 1190 to 1198, 1199 to 1207, 1217 to 1225, 1235 to 1243, 1253 to 1261, 1280 to 1288, 1289 to 1297, 1298 to 1306, 1307 to 1315, 1316 to 1324, 1325 to 1333, 1334 to 1342, 1343 to 1351, 1352 to 1360, 1361 to 1369, 1370 to 1378, 1379 to 1387, 1388 to 1396, 1397 to 1405, 1406 to 1414, 1415 to 1423, 1424 to 1432, 1433 to 1441, 1442 to 1450, 1451 to 1459, 1460 to 1468, 1469 to 1477, 1478 to 1486, 1496 to 1504, 1505 to 1513, 1514 to 1522, 1523 to 1531, 1532 to 1540, 1541 to 1549, 1550 to 1558, 1559 to 1567, 1568 to 1576, 1577 to 1585, 1586 to 1594, and 1595 to 1603. Composition is skewed to polar residues over residues 965 to 989 and 1001 to 1020; these read PAQT…TSYT and PAQT…NPAA. Positions 965–1603 are 37 X 9 AA repeat of P-A-Q-T-X-Y-X-X-E; that stretch reads PAQTSYAVEP…EPAQTSYSEE (639 aa). A disordered region spans residues 965-1651; the sequence is PAQTSYAVEP…RPDMPRNQPR (687 aa). Residues 1046–1079 show a composition bias toward polar residues; the sequence is PAQTSCIEEPAQTSYTNPAAETSYTEEPAQTSYT. Composition is skewed to polar residues over residues 1107-1178, 1190-1206, 1217-1242, 1251-1484, and 1496-1601; these read EEPS…TSYT, PAQT…NYTK, PAQT…NYTV, EEPS…TNYT, and PAQT…TSYS. Residues 1859-1881 form a C2H2-type 6; degenerate zinc finger; the sequence is NECKECGECFATVEDLGRHQKIY. The interval 1900-1921 is disordered; that stretch reads LGLDGSPEEELEEQEEPEEPED. A compositionally biased stretch (acidic residues) spans 1905–1921; it reads SPEEELEEQEEPEEPED. C2H2-type zinc fingers lie at residues 1924-1946, 1980-2002, 2040-2062, 2097-2119, and 2148-2170; these read YGCK…QKVH, YECP…QKVH, PQCQ…ARGH, YECE…MRVH, and YECK…QKLH. The tract at residues 2059–2102 is disordered; it reads ARGHAGEGLPDQGQGGAGAAGPGPAPTEPQQDPGEEQRYECETC. Residues 2204–2322 are disordered; the sequence is NVEAAEPEVE…DCGECGETFP (119 aa). Acidic residues-rich tracts occupy residues 2208–2228 and 2257–2311; these read AEPE…EVEA and EQPD…EEPY. 2 C2H2-type zinc fingers span residues 2312–2334 and 2363–2385; these read YDCG…LTAH and FKCD…QNTH.

It belongs to the krueppel C2H2-type zinc-finger protein family. In terms of assembly, homodimer. Interacts with SIAH1A and SIAH2. Interacts with TRAF2. As to expression, expressed at high levels in the cerebellum and at moderate levels in the testis and ovary.

The protein resides in the nucleus. The protein localises to the cytoplasm. Induces apoptosis in cooperation with SIAH1A. Acts as a mediator between p53/TP53 and BAX in a neuronal death pathway that is activated by DNA damage. Acts synergistically with TRAF2 and inhibits TNF induced apoptosis through activation of NF-kappa-B. The sequence is that of Paternally-expressed gene 3 protein (PEG3) from Bos taurus (Bovine).